We begin with the raw amino-acid sequence, 476 residues long: Neuropeptide receptor 18 (476 aa).

Residues 1 to 61 (MSSFYNEAKF…LSNHDNSSLM (61 aa)) lie on the Extracellular side of the membrane. Residues N43 and N57 are each glycosylated (N-linked (GlcNAc...) asparagine). The helical transmembrane segment at 62–82 (LIAGFYALLFMFGTCGNAAIL) threads the bilayer. Residues 83-102 (AVVHHVKGQDPRSRHNTTLT) lie on the Cytoplasmic side of the membrane. The chain crosses the membrane as a helical span at residues 103–123 (YICILSIVDFLSMLPIPMTII). The Extracellular segment spans residues 124–139 (DQILGFWMFDTFACKL). A disulfide bridge connects residues C137 and C228. The chain crosses the membrane as a helical span at residues 140-160 (FRLLEHIGKIFSTFILVAFSI). Residues 161-179 (DRYCAVCHPLQVRVRNQRT) lie on the Cytoplasmic side of the membrane. A helical membrane pass occupies residues 180–200 (VFVFLGIMFFVTCVMLSPILL). The Extracellular segment spans residues 201–236 (YAHSKELVMHEKVDLDQEVITRMHLYKCVDDLGREL). Residues 237–257 (FVVFTLYSFVLAYLMPLLFMI) form a helical membrane-spanning segment. Residues 258-291 (YFYYEMLIRLFKQANVIKQTLVGRRSGGEEKKLT) lie on the Cytoplasmic side of the membrane. Residues 292-312 (IPVGHIAIYTLAICSFHFICW) traverse the membrane as a helical segment. The Extracellular segment spans residues 313–334 (TPYWISILYSLYEELYQDTKST). Residues 335-355 (ASPPTYAFIYFMYGVHALPYI) form a helical membrane-spanning segment. The Cytoplasmic portion of the chain corresponds to 356-476 (NSASNFILYG…ITPDTESVIL (121 aa)).

This sequence belongs to the G-protein coupled receptor 1 family. As to expression, expressed in sensory neurons including ASER.

Its subcellular location is the cell membrane. Functionally, probable receptor for neuropeptide ligand nlp-9 that plays a role in octopamine signaling and specifically, the octapamine inhibition of aversion responses in olfactory sensory neurons. In AWB olfactory sensory neurons, required for the detection of preferred food sources. The sequence is that of Neuropeptide receptor 18 from Caenorhabditis elegans.